Here is a 284-residue protein sequence, read N- to C-terminus: Expansin-A17 (284 aa).

A signal peptide spans 1 to 21; that stretch reads MASSWNNPAIFLAAALAVATA. Residues 71–185 form the Expansin-like EG45 domain; that stretch reads GGACGYVSND…RRVPCQRTGG (115 aa). The 85-residue stretch at 195-279 folds into the Expansin-like CBD domain; sequence YWLLLYVMNV…WWITGLCYQG (85 aa).

This sequence belongs to the expansin family. Expansin A subfamily. In terms of tissue distribution, expressed in roots.

Its subcellular location is the secreted. It localises to the cell wall. The protein resides in the membrane. Its function is as follows. May cause loosening and extension of plant cell walls by disrupting non-covalent bonding between cellulose microfibrils and matrix glucans. No enzymatic activity has been found. May be required for rapid internodal elongation in deepwater rice during submergence. This is Expansin-A17 (EXPA17) from Oryza sativa subsp. japonica (Rice).